The primary structure comprises 277 residues: Pantothenate synthetase (277 aa).

26-33 (MGNLHEGH) serves as a coordination point for ATP. Histidine 33 acts as the Proton donor in catalysis. Glutamine 57 contributes to the (R)-pantoate binding site. Residue glutamine 57 participates in beta-alanine binding. 144–147 (GKKD) provides a ligand contact to ATP. Glutamine 150 provides a ligand contact to (R)-pantoate. ATP is bound by residues glycine 173 and 181 to 184 (LSSR).

It belongs to the pantothenate synthetase family. Homodimer.

The protein localises to the cytoplasm. The enzyme catalyses (R)-pantoate + beta-alanine + ATP = (R)-pantothenate + AMP + diphosphate + H(+). Its pathway is cofactor biosynthesis; (R)-pantothenate biosynthesis; (R)-pantothenate from (R)-pantoate and beta-alanine: step 1/1. In terms of biological role, catalyzes the condensation of pantoate with beta-alanine in an ATP-dependent reaction via a pantoyl-adenylate intermediate. This chain is Pantothenate synthetase, found in Chromobacterium violaceum (strain ATCC 12472 / DSM 30191 / JCM 1249 / CCUG 213 / NBRC 12614 / NCIMB 9131 / NCTC 9757 / MK).